The sequence spans 226 residues: Holliday junction branch migration complex subunit RuvA (226 aa).

The interval 1–67 is domain I; that stretch reads MITSVYAKIE…AINKELYAFK (67 aa). A domain II region spans residues 68–145; sequence SLKEKEWFKA…YLKNQIVVSD (78 aa). Residues 146 to 167 form a flexible linker region; it reads KVEPQIDDDEKIDDSKDLNDDE. The segment at 168 to 226 is domain III; that stretch reads LLSEIVIEAIDCLISLGYKQEQIKTALAEIDLKNESINDSADLVAVIIKQIGLRTSEVS.

The protein belongs to the RuvA family. Homotetramer. Forms an RuvA(8)-RuvB(12)-Holliday junction (HJ) complex. HJ DNA is sandwiched between 2 RuvA tetramers; dsDNA enters through RuvA and exits via RuvB. An RuvB hexamer assembles on each DNA strand where it exits the tetramer. Each RuvB hexamer is contacted by two RuvA subunits (via domain III) on 2 adjacent RuvB subunits; this complex drives branch migration. In the full resolvosome a probable DNA-RuvA(4)-RuvB(12)-RuvC(2) complex forms which resolves the HJ.

The protein resides in the cytoplasm. Its function is as follows. The RuvA-RuvB-RuvC complex processes Holliday junction (HJ) DNA during genetic recombination and DNA repair, while the RuvA-RuvB complex plays an important role in the rescue of blocked DNA replication forks via replication fork reversal (RFR). RuvA specifically binds to HJ cruciform DNA, conferring on it an open structure. The RuvB hexamer acts as an ATP-dependent pump, pulling dsDNA into and through the RuvAB complex. HJ branch migration allows RuvC to scan DNA until it finds its consensus sequence, where it cleaves and resolves the cruciform DNA. The sequence is that of Holliday junction branch migration complex subunit RuvA from Mycoplasmoides gallisepticum (strain R(low / passage 15 / clone 2)) (Mycoplasma gallisepticum).